The chain runs to 98 residues: C-X-C motif chemokine 10 (98 aa).

A signal peptide spans 1–21; sequence MNPSAAVVLCLVLLSLSGTQG. Arg26 carries the citrulline modification. Cystine bridges form between Cys30-Cys57 and Cys32-Cys74.

It belongs to the intercrine alpha (chemokine CxC) family. In terms of assembly, monomer, dimer, and tetramer. Interacts with CXCR3 (via N-terminus). As to expression, in the central nervous system, CXCL10 is predominantly localized to activated neurons. Expressed in both microglia and astrocytes.

It is found in the secreted. In terms of biological role, pro-inflammatory cytokine that is involved in a wide variety of processes such as chemotaxis, differentiation, and activation of peripheral immune cells, regulation of cell growth, apoptosis and modulation of angiostatic effects. Plays thereby an important role during viral infections by stimulating the activation and migration of immune cells to the infected sites. Mechanistically, binding of CXCL10 to the CXCR3 receptor activates G protein-mediated signaling and results in downstream activation of phospholipase C-dependent pathway, an increase in intracellular calcium production and actin reorganization. In turn, recruitment of activated Th1 lymphocytes occurs at sites of inflammation. Activation of the CXCL10/CXCR3 axis also plays an important role in neurons in response to brain injury for activating microglia, the resident macrophage population of the central nervous system, and directing them to the lesion site. This recruitment is an essential element for neuronal reorganization. The protein is C-X-C motif chemokine 10 (Cxcl10) of Rattus norvegicus (Rat).